The primary structure comprises 603 residues: Geraniol synthase Tps-5031G8, chloroplastic (603 aa).

The transit peptide at 1 to 35 directs the protein to the chloroplast; sequence MCSISQKVVIGLNKAAANNCLQNLDRRGFKTRRVS. (2E)-geranyl diphosphate-binding residues include Arg-319, Asp-356, Asp-360, Arg-497, and Asp-500. The Mg(2+) site is built by Asp-356 and Asp-360. Positions 356–360 match the DDXXD motif motif; it reads DDVYD. Mg(2+) contacts are provided by Asp-500, Thr-504, and Glu-508.

This sequence belongs to the terpene synthase family. Tpsb subfamily. Monomer. Requires Mg(2+) as cofactor. The cofactor is Mn(2+).

The protein resides in the plastid. Its subcellular location is the chloroplast. It carries out the reaction (2E)-geranyl diphosphate + H2O = (2E)-geraniol + diphosphate. It participates in secondary metabolite biosynthesis; terpenoid biosynthesis. In terms of biological role, monoterpene synthase (mono-TPS) involved in the biosynthesis of monoterpenes natural products. Catalyzes the conversion of (2E)-geranyl diphosphate (GPP) into geraniol. This is Geraniol synthase Tps-5031G8, chloroplastic from Perilla frutescens var. hirtella (Perilla citriodora).